Here is a 576-residue protein sequence, read N- to C-terminus: Arginine--tRNA ligase (576 aa).

Positions 122–132 (PNVAKEMHVGH) match the 'HIGH' region motif.

It belongs to the class-I aminoacyl-tRNA synthetase family. Monomer.

It is found in the cytoplasm. The catalysed reaction is tRNA(Arg) + L-arginine + ATP = L-arginyl-tRNA(Arg) + AMP + diphosphate. The polypeptide is Arginine--tRNA ligase (Mannheimia succiniciproducens (strain KCTC 0769BP / MBEL55E)).